We begin with the raw amino-acid sequence, 65 residues long: Large ribosomal subunit protein uL30 (65 aa).

The protein belongs to the universal ribosomal protein uL30 family. As to quaternary structure, part of the 50S ribosomal subunit.

This is Large ribosomal subunit protein uL30 from Mesorhizobium japonicum (strain LMG 29417 / CECT 9101 / MAFF 303099) (Mesorhizobium loti (strain MAFF 303099)).